We begin with the raw amino-acid sequence, 95 residues long: MAHFKDDLQTNVEIIPGESAPRKESPRPPAPPSSAAGVGGCSNHSPSVQESPLSPPALAQLGSAQQPSMRTELSFSEKKDTMIIWQITITVWCQR.

The disordered stretch occupies residues 1 to 73 (MAHFKDDLQT…AQQPSMRTEL (73 aa)). Composition is skewed to polar residues over residues 42 to 52 (SNHSPSVQESP) and 62 to 73 (GSAQQPSMRTEL).

This is an uncharacterized protein from Homo sapiens (Human).